The primary structure comprises 274 residues: Pyrroline-5-carboxylate reductase 3 (274 aa).

Residue A2 is modified to N-acetylalanine.

It belongs to the pyrroline-5-carboxylate reductase family. Homodecamer; composed of 5 homodimers.

The protein resides in the cytoplasm. The catalysed reaction is L-proline + NADP(+) = (S)-1-pyrroline-5-carboxylate + NADPH + 2 H(+). The enzyme catalyses L-proline + NAD(+) = (S)-1-pyrroline-5-carboxylate + NADH + 2 H(+). The protein operates within amino-acid biosynthesis; L-proline biosynthesis; L-proline from L-glutamate 5-semialdehyde: step 1/1. Functionally, oxidoreductase that catalyzes the last step in proline biosynthesis, which corresponds to the reduction of pyrroline-5-carboxylate (P5C) to L-proline using NAD(P)H. Proline is synthesized from either glutamate or ornithine; both are converted to P5C, and then to proline via pyrroline-5-carboxylate reductases (PYCRs). PYCR3 is exclusively linked to the biosynthesis of proline from ornithine. This is Pyrroline-5-carboxylate reductase 3 from Macaca fascicularis (Crab-eating macaque).